A 311-amino-acid chain; its full sequence is Cadmium, cobalt and zinc/H(+)-K(+) antiporter (311 aa).

Residues 1–12 (MGHNHNEGANKK) lie on the Extracellular side of the membrane. The chain crosses the membrane as a helical span at residues 13–33 (VLLISFIMITGYMIIEAIGGF). Residues 34-43 (LTNSLALLSD) are Cytoplasmic-facing. A helical transmembrane segment spans residues 44–64 (AGHMLSDSISLMVALIAFTLA). Residues 65 to 78 (EKKANHNKTFGYKR) lie on the Extracellular side of the membrane. A helical transmembrane segment spans residues 79–99 (FEILAAVINGAALILISLYII). Residues 100–115 (YEAIERFSNPPKVATT) are Cytoplasmic-facing. The helical transmembrane segment at 116-136 (GMLTISIIGLVVNLLVAWIMM) threads the bilayer. Residues 137–157 (SGGDTKNNLNIRGAYLHVISD) are Extracellular-facing. Residues 158–178 (MLGSVGAILAAILIIFFGWGW) form a helical membrane-spanning segment. Topologically, residues 179 to 311 (ADPLASIIVA…MEKQRDHHHH (133 aa)) are cytoplasmic.

The protein belongs to the cation diffusion facilitator (CDF) transporter (TC 2.A.4) family. SLC30A subfamily.

Its subcellular location is the cell membrane. Functionally, involved in divalent cation and potassium homeostasis in the cell. Catalyzes the active efflux of zinc, cadmium and cobalt, in exchange for potassium and H(+) ions. The polypeptide is Cadmium, cobalt and zinc/H(+)-K(+) antiporter (czcD) (Bacillus subtilis (strain 168)).